We begin with the raw amino-acid sequence, 470 residues long: Uronate isomerase (470 aa).

The protein belongs to the metallo-dependent hydrolases superfamily. Uronate isomerase family.

It catalyses the reaction D-glucuronate = D-fructuronate. The enzyme catalyses aldehydo-D-galacturonate = keto-D-tagaturonate. It functions in the pathway carbohydrate metabolism; pentose and glucuronate interconversion. This chain is Uronate isomerase, found in Salmonella arizonae (strain ATCC BAA-731 / CDC346-86 / RSK2980).